Here is a 241-residue protein sequence, read N- to C-terminus: Small ribosomal subunit protein uS2 (241 aa).

It belongs to the universal ribosomal protein uS2 family.

In Yersinia pestis bv. Antiqua (strain Antiqua), this protein is Small ribosomal subunit protein uS2.